We begin with the raw amino-acid sequence, 264 residues long: Phosphonoacetaldehyde hydrolase (264 aa).

Catalysis depends on D9, which acts as the Nucleophile. Mg(2+)-binding residues include D9 and A11. Residue K50 is the Schiff-base intermediate with substrate of the active site. D183 is a Mg(2+) binding site.

The protein belongs to the HAD-like hydrolase superfamily. PhnX family. Homodimer. Mg(2+) is required as a cofactor.

The catalysed reaction is phosphonoacetaldehyde + H2O = acetaldehyde + phosphate + H(+). Its function is as follows. Involved in phosphonate degradation. The chain is Phosphonoacetaldehyde hydrolase from Bacillus cytotoxicus (strain DSM 22905 / CIP 110041 / 391-98 / NVH 391-98).